Here is a 335-residue protein sequence, read N- to C-terminus: Glucan endo-1,3-beta-glucosidase, acidic isoform (335 aa).

Positions 1–29 (MARQGVIASMHALALLLGAFAAIPTGVQS) are cleaved as a signal peptide. Residue E122 is the Proton donor of the active site. The active-site Nucleophile is E259.

Belongs to the glycosyl hydrolase 17 family. Accumulates in aleurone layers. Much lower levels are found in the embryo, and none in starchy endosperm.

Its subcellular location is the secreted. The protein resides in the extracellular space. It carries out the reaction Hydrolysis of (1-&gt;3)-beta-D-glucosidic linkages in (1-&gt;3)-beta-D-glucans.. Its function is as follows. Is thought to be an important plant defense-related product against fungal pathogens. The sequence is that of Glucan endo-1,3-beta-glucosidase, acidic isoform from Zea mays (Maize).